The following is a 718-amino-acid chain: K(+)-insensitive pyrophosphate-energized proton pump (718 aa).

6 consecutive transmembrane segments (helical) span residues 6 to 26, 54 to 76, 81 to 103, 112 to 132, 133 to 153, and 168 to 188; these read AVLV…IWAI, LTRQ…WYLL, AIGF…HVSV, AASL…AITG, LLVA…LTVW, and VSLG…GGIF. Residue K190 coordinates substrate. Mg(2+) contacts are provided by D193, D197, N220, and D223. Transmembrane regions (helical) follow at residues 240 to 260, 265 to 285, 300 to 320, 335 to 355, 385 to 405, and 413 to 433; these read AVTV…SDIL, LYPL…TFFV, GLIA…TLTV, GTNL…IVVI, GLAV…GGII, and LFGT…IVAL. D441 is a binding site for Mg(2+). 4 helical membrane passes run 472–492, 524–544, 593–613, and 620–640; these read AVTK…LFAA, YVVA…GMAM, IIPS…VLLI, and AFAA…FVAI. 3 residues coordinate Ca(2+): D650, D682, and D686. K689 contacts substrate. Residues 695-715 form a helical membrane-spanning segment; the sequence is AVNPAIKITNIVALLLLAVLA.

The protein belongs to the H(+)-translocating pyrophosphatase (TC 3.A.10) family. K(+)-insensitive subfamily. In terms of assembly, homodimer. It depends on Mg(2+) as a cofactor.

It localises to the cell inner membrane. The enzyme catalyses diphosphate + H2O + H(+)(in) = 2 phosphate + 2 H(+)(out). Proton pump that utilizes the energy of pyrophosphate hydrolysis as the driving force for proton movement across the membrane. Generates a proton motive force. The polypeptide is K(+)-insensitive pyrophosphate-energized proton pump (Brucella anthropi (strain ATCC 49188 / DSM 6882 / CCUG 24695 / JCM 21032 / LMG 3331 / NBRC 15819 / NCTC 12168 / Alc 37) (Ochrobactrum anthropi)).